We begin with the raw amino-acid sequence, 205 residues long: Small ribosomal subunit protein uS4 (205 aa).

The disordered stretch occupies residues 18-46; sequence NIWGRPKSPVNRREYGPGQHGQRRKGKLS. Positions 94–157 constitute an S4 RNA-binding domain; it reads RRLDTVVFRA…KQLAIVLEAT (64 aa).

This sequence belongs to the universal ribosomal protein uS4 family. As to quaternary structure, part of the 30S ribosomal subunit. Contacts protein S5. The interaction surface between S4 and S5 is involved in control of translational fidelity.

Its function is as follows. One of the primary rRNA binding proteins, it binds directly to 16S rRNA where it nucleates assembly of the body of the 30S subunit. In terms of biological role, with S5 and S12 plays an important role in translational accuracy. This is Small ribosomal subunit protein uS4 from Bradyrhizobium sp. (strain BTAi1 / ATCC BAA-1182).